The sequence spans 504 residues: Syntaphilin (504 aa).

Residues M1–Q74 are disordered. Composition is skewed to low complexity over residues G7–R26 and S33–S49. Residues L79–K161 adopt a coiled-coil conformation. The disordered stretch occupies residues V191–G244. A phosphoserine mark is found at S200 and S204. The segment covering R207–K217 has biased composition (polar residues). Position 214 is a phosphothreonine (T214). Residue S219 is modified to Phosphoserine. At T235 the chain carries Phosphothreonine. A helical membrane pass occupies residues Y437 to C456.

Binds to STX1A. Interacts with DNM1; this interaction inhibits the binding of DNM1 to AMPH and DNM1-receptor-mediated endocytosis.

It is found in the membrane. The protein resides in the synapse. Its subcellular location is the synaptosome. Inhibits SNARE complex formation by absorbing free STX1A. In Rattus norvegicus (Rat), this protein is Syntaphilin.